Consider the following 426-residue polypeptide: Glucose-1-phosphate adenylyltransferase (426 aa).

Alpha-D-glucose 1-phosphate-binding positions include Y100, G165, 180-181, and S191; that span reads EK.

The protein belongs to the bacterial/plant glucose-1-phosphate adenylyltransferase family. Homotetramer.

The catalysed reaction is alpha-D-glucose 1-phosphate + ATP + H(+) = ADP-alpha-D-glucose + diphosphate. It functions in the pathway glycan biosynthesis; glycogen biosynthesis. Involved in the biosynthesis of ADP-glucose, a building block required for the elongation reactions to produce glycogen. Catalyzes the reaction between ATP and alpha-D-glucose 1-phosphate (G1P) to produce pyrophosphate and ADP-Glc. This is Glucose-1-phosphate adenylyltransferase from Acetivibrio thermocellus (strain ATCC 27405 / DSM 1237 / JCM 9322 / NBRC 103400 / NCIMB 10682 / NRRL B-4536 / VPI 7372) (Clostridium thermocellum).